We begin with the raw amino-acid sequence, 152 residues long: Transcriptional regulator MraZ (152 aa).

2 consecutive SpoVT-AbrB domains span residues 5-52 (ATLV…PLPE) and 81-124 (ASEC…DEQT).

The protein belongs to the MraZ family. Forms oligomers.

It localises to the cytoplasm. It is found in the nucleoid. In terms of biological role, negatively regulates its own expression and that of the subsequent genes in the proximal part of the division and cell wall (dcw) gene cluster. Acts by binding directly to DNA. May also regulate the expression of genes outside the dcw cluster. This chain is Transcriptional regulator MraZ, found in Pectobacterium atrosepticum (strain SCRI 1043 / ATCC BAA-672) (Erwinia carotovora subsp. atroseptica).